The following is a 282-amino-acid chain: Complement component 1 Q subcomponent-binding protein, mitochondrial (282 aa).

A mitochondrion-targeting transit peptide spans 1-70 (MLPLLRCVPR…PRGPCACGCG (70 aa)). The tract at residues 76-93 (TEGDKAFVDFLNDEIKEE) is C1q binding. Lys91 bears the N6-acetyllysine mark. Residues 137-163 (NSIPPTFDGEEEPTQGQKVEEQEPELT) form a disordered region. The tract at residues 168–213 (FVVEVIKNDDGKKALVLDCHYPEDEVGQEDEAESDIFSIREVSFQS) is interaction with MAVS. The residue at position 188 (Tyr188) is a Phosphotyrosine. 2 positions are modified to phosphoserine: Ser201 and Ser205.

The protein belongs to the MAM33 family. In terms of assembly, homotrimer; three monomers form a donut-shaped structure with an unusually asymmetric charge distribution on the surface. Interacts with CDK13, HRK, VTN, NFYB, ADRA1B, FOXC1, DDX21, DDX50, NCL, SRSF1 and SRSF9. Interacts with CD93; the association may represent a cell surface C1q receptor. Interacts with KRT1; the association represents a cell surface kininogen receptor. Interacts with CD209; the interaction is indicative for a C1q:C1QBP:CD209 signaling complex. Interacts with FBL and RRP1; the respective interactions with C1QBP are competitive. Probably associates with the mitoribosome. Interacts with MAVS; the interaction occurs upon viral transfection. Interacts with PPIF. Interacts with U2AF1L4. Interacts with PLEKHN1. Interacts with VGF-derived peptide TLQP-21. Interacts with MRE11 and RAD50; forming the MRC (MRE11-RAD50-C1QBP) complex that inhibits the activity of MRE11. (Microbial infection) Interacts with Rubella virus capsid protein; the interaction occurs in mitochondria. As to quaternary structure, (Microbial infection) Interacts with L.monocytogenes InlB.

The protein resides in the mitochondrion matrix. It is found in the nucleus. Its subcellular location is the cell membrane. It localises to the secreted. The protein localises to the cytoplasm. The protein resides in the nucleolus. Functionally, multifunctional and multicompartmental protein involved in inflammation and infection processes, ribosome biogenesis, protein synthesis in mitochondria, regulation of apoptosis, transcriptional regulation and pre-mRNA splicing. At the cell surface is thought to act as an endothelial receptor for plasma proteins of the complement and kallikrein-kinin cascades. Putative receptor for C1q; specifically binds to the globular 'heads' of C1q thus inhibiting C1; may perform the receptor function through a complex with C1qR/CD93. In complex with cytokeratin-1/KRT1 is a high affinity receptor for kininogen-1/HMWK. Can also bind other plasma proteins, such as coagulation factor XII leading to its autoactivation. May function to bind initially fluid kininogen-1 to the cell membrane. The secreted form may enhance both extrinsic and intrinsic coagulation pathways. It is postulated that the cell surface form requires docking with transmembrane proteins for downstream signaling which might be specific for a cell-type or response. By acting as C1q receptor is involved in chemotaxis of immature dendritic cells and neutrophils and is proposed to signal through CD209/DC-SIGN on immature dendritic cells, through integrin alpha-4/beta-1 during trophoblast invasion of the decidua, and through integrin beta-1 during endothelial cell adhesion and spreading. Signaling involved in inhibition of innate immune response is implicating the PI3K-AKT/PKB pathway. Required for protein synthesis in mitochondria. In mitochondrial translation may be involved in formation of functional 55S mitoribosomes; the function seems to involve its RNA-binding activity. Acts as a RNA modification reader, which specifically recognizes and binds mitochondrial RNAs modified by C5-methylcytosine (m5C) in response to stress, and promotes recruitment of the mitochondrial degradosome complex, leading to their degradation. May be involved in the nucleolar ribosome maturation process; the function may involve the exchange of FBL for RRP1 in the association with pre-ribosome particles. Involved in regulation of RNA splicing by inhibiting the RNA-binding capacity of SRSF1 and its phosphorylation. Is required for the nuclear translocation of splicing factor U2AF1L4. Involved in regulation of CDKN2A- and HRK-mediated apoptosis. Stabilizes mitochondrial CDKN2A isoform smARF. May be involved in regulation of FOXC1 transcriptional activity and NFY/CCAAT-binding factor complex-mediated transcription. May play a role in antibacterial defense as it can bind to cell surface hyaluronan and inhibit Streptococcus pneumoniae hyaluronate lyase. May be involved in modulation of the immune response; ligation by HCV core protein is resulting in suppression of interleukin-12 production in monocyte-derived dendritic cells. Involved in regulation of antiviral response by inhibiting RIGI- and IFIH1-mediated signaling pathways probably involving its association with MAVS after viral infection. Acts as a regulator of DNA repair via homologous recombination by inhibiting the activity of MRE11: interacts with unphosphorylated MRE11 and RAD50 in absence of DNA damage, preventing formation and activity of the MRN complex. Following DNA damage, dissociates from phosphorylated MRE11, allowing formation of the MRN complex. In terms of biological role, (Microbial infection) During bacterial infection processes acts as an attachment site for microbial proteins, including Listeria monocytogenes internalin B (InlB). This chain is Complement component 1 Q subcomponent-binding protein, mitochondrial (C1QBP), found in Chlorocebus aethiops (Green monkey).